We begin with the raw amino-acid sequence, 254 residues long: Triosephosphate isomerase, cytosolic (254 aa).

Residues Asn-10 and Lys-12 each contribute to the substrate site. Residue His-96 is the Electrophile of the active site. Glu-166 functions as the Proton acceptor in the catalytic mechanism.

Belongs to the triosephosphate isomerase family. As to quaternary structure, homodimer.

It localises to the cytoplasm. It catalyses the reaction D-glyceraldehyde 3-phosphate = dihydroxyacetone phosphate. Its pathway is carbohydrate biosynthesis; gluconeogenesis. The protein operates within carbohydrate degradation; glycolysis; D-glyceraldehyde 3-phosphate from glycerone phosphate: step 1/1. This chain is Triosephosphate isomerase, cytosolic (TPIP1), found in Petunia hybrida (Petunia).